The chain runs to 184 residues: Probable archaeosortase E (184 aa).

4 consecutive transmembrane segments (helical) span residues 27–47 (ILFL…LSYF), 86–106 (VVEE…IIVY), 114–134 (IIGI…IVLI), and 151–171 (IAGY…YLKI). Residue cysteine 90 is the Acyl-thioester intermediate of the active site. Arginine 130 (proton donor) is an active-site residue.

The protein belongs to the exosortase/archaeosortase family. Archaeosortase E subfamily.

The protein resides in the cell membrane. Transpeptidase that recognizes and modifies its substrate by proteolytic cleavage of a sorting signal. Following cleavage, a covalent intermediate is formed via a thioester bond between the archaeosortase and its substrate, which is then transferred and covalently attached to the cell membrane. The protein is Probable archaeosortase E of Methanocaldococcus jannaschii (strain ATCC 43067 / DSM 2661 / JAL-1 / JCM 10045 / NBRC 100440) (Methanococcus jannaschii).